A 426-amino-acid polypeptide reads, in one-letter code: NADH-quinone oxidoreductase subunit F (426 aa).

65–74 (GRGGAGFPTG) serves as a coordination point for NAD(+). Position 176-223 (176-223 (GAGAYICGEETALIESLEGKRGHPRLKPPYPVQKGLWGKPTVVNNVET)) interacts with FMN. [4Fe-4S] cluster-binding residues include C347, C350, C353, and C393.

This sequence belongs to the complex I 51 kDa subunit family. The cofactor is FMN. Requires [4Fe-4S] cluster as cofactor.

It catalyses the reaction a quinone + NADH + 5 H(+)(in) = a quinol + NAD(+) + 4 H(+)(out). In terms of biological role, NDH-1 shuttles electrons from NADH, via FMN and iron-sulfur (Fe-S) centers, to quinones in the respiratory chain. Couples the redox reaction to proton translocation (for every two electrons transferred, four hydrogen ions are translocated across the cytoplasmic membrane), and thus conserves the redox energy in a proton gradient. The sequence is that of NADH-quinone oxidoreductase subunit F (nuoF) from Aquifex aeolicus (strain VF5).